The sequence spans 947 residues: Pyruvate, phosphate dikinase 1, chloroplastic (947 aa).

The transit peptide at methionine 1 to proline 71 directs the protein to the chloroplast. The disordered stretch occupies residues arginine 39–cysteine 60. At threonine 527 the chain carries Phosphothreonine; by PDRP1. Histidine 529 (tele-phosphohistidine intermediate) is an active-site residue. Residues arginine 635, arginine 692, glutamate 821, glycine 842, threonine 843, asparagine 844, and aspartate 845 each coordinate substrate. Glutamate 821 serves as a coordination point for Mg(2+). A Mg(2+)-binding site is contributed by aspartate 845. Cysteine 907 (proton donor) is an active-site residue.

This sequence belongs to the PEP-utilizing enzyme family. As to quaternary structure, homotetramer. Mg(2+) serves as cofactor. Post-translationally, phosphorylation of Thr-527 in the dark inactivates the enzyme. Dephosphorylation upon light stimulation reactivates the enzyme. Phosphorylation increases during the first 20 days post-pollination and then remains constant through the 40-day mature seed stage. Reactivation by dephosphorylation during germination is negligible. Isoform 1 is only expressed in green leaves. Isoform 2 is found in roots, stems, rachis branches, leaf sheaths, green leaves and spikelets. The non-phosphorylated PPDK in mature seeds is endosperm-localized.

The protein localises to the plastid. It localises to the chloroplast. It is found in the cytoplasm. It carries out the reaction pyruvate + phosphate + ATP = phosphoenolpyruvate + AMP + diphosphate + H(+). With respect to regulation, activated by light-induced dephosphorylation. Inhibited by dark-induced phosphorylation. Both reactions are catalyzed by PDRP1. Its function is as follows. Formation of phosphoenolpyruvate. The cytoplasmic isoform supports the biosynthetic processes in the nascent endosperm and provides an efficient mechanism for glycolytic ATP synthesis in oxygen depleted tissues. May be involved in regulating the flux of carbon into starch and fatty acids of seeds and in the remobilization of nitrogen reserves in senescing leaves. In Oryza sativa subsp. japonica (Rice), this protein is Pyruvate, phosphate dikinase 1, chloroplastic (PPDK1).